The primary structure comprises 475 residues: Ribulose bisphosphate carboxylase large chain (475 aa).

A propeptide spanning residues 1 to 2 is cleaved from the precursor; the sequence is MS. Pro-3 carries the post-translational modification N-acetylproline. N6,N6,N6-trimethyllysine is present on Lys-14. Substrate contacts are provided by Asn-123 and Thr-173. Lys-175 acts as the Proton acceptor in catalysis. Lys-177 is a binding site for substrate. Residues Lys-201, Asp-203, and Glu-204 each contribute to the Mg(2+) site. Residue Lys-201 is modified to N6-carboxylysine. Catalysis depends on His-294, which acts as the Proton acceptor. Substrate contacts are provided by Arg-295, His-327, and Ser-379.

This sequence belongs to the RuBisCO large chain family. Type I subfamily. As to quaternary structure, heterohexadecamer of 8 large chains and 8 small chains; disulfide-linked. The disulfide link is formed within the large subunit homodimers. Mg(2+) serves as cofactor. The disulfide bond which can form in the large chain dimeric partners within the hexadecamer appears to be associated with oxidative stress and protein turnover.

It is found in the plastid. Its subcellular location is the chloroplast. It catalyses the reaction 2 (2R)-3-phosphoglycerate + 2 H(+) = D-ribulose 1,5-bisphosphate + CO2 + H2O. The catalysed reaction is D-ribulose 1,5-bisphosphate + O2 = 2-phosphoglycolate + (2R)-3-phosphoglycerate + 2 H(+). Its function is as follows. RuBisCO catalyzes two reactions: the carboxylation of D-ribulose 1,5-bisphosphate, the primary event in carbon dioxide fixation, as well as the oxidative fragmentation of the pentose substrate in the photorespiration process. Both reactions occur simultaneously and in competition at the same active site. The sequence is that of Ribulose bisphosphate carboxylase large chain from Atriplex rosea (Red orache).